The primary structure comprises 696 residues: Elongation factor G (696 aa).

Positions 8-286 (EDVRNIGIAA…AVVAYLPAPT (279 aa)) constitute a tr-type G domain. Residues 17-24 (AHIDAGKT), 81-85 (DTPGH), and 135-138 (NKMD) contribute to the GTP site.

Belongs to the TRAFAC class translation factor GTPase superfamily. Classic translation factor GTPase family. EF-G/EF-2 subfamily.

It is found in the cytoplasm. In terms of biological role, catalyzes the GTP-dependent ribosomal translocation step during translation elongation. During this step, the ribosome changes from the pre-translocational (PRE) to the post-translocational (POST) state as the newly formed A-site-bound peptidyl-tRNA and P-site-bound deacylated tRNA move to the P and E sites, respectively. Catalyzes the coordinated movement of the two tRNA molecules, the mRNA and conformational changes in the ribosome. This Sulfurimonas denitrificans (strain ATCC 33889 / DSM 1251) (Thiomicrospira denitrificans (strain ATCC 33889 / DSM 1251)) protein is Elongation factor G.